The sequence spans 4592 residues: Intermembrane lipid transfer protein vps13D (4592 aa).

The region spanning 3–102 (FESVVAEVID…SSTNVSSNYS (100 aa)) is the Chorein N-terminal domain. Disordered regions lie at residues 95–142 (TNVS…TASQ), 157–199 (LDKK…IDSQ), 286–307 (STTS…SSSS), 445–529 (KKDD…IKGI), 574–605 (SNST…LSPM), 826–861 (NYNN…QQGI), 1040–1083 (TTSP…KRQW), 1219–1249 (YFKN…EKKP), 1655–1717 (QQQE…QQSN), 1855–1886 (SNNN…NSLF), 1971–2001 (TSSL…TTTS), 2025–2056 (PLIN…EQQQ), and 2245–2270 (NNNN…NIIN). 2 stretches are compositionally biased toward low complexity: residues 117–139 (SSSN…TTST) and 172–199 (KSTN…IDSQ). A coiled-coil region spans residues 437–517 (KNATIKLNKK…KKKEEKGKSK (81 aa)). A compositionally biased stretch (basic and acidic residues) spans 445–457 (KKDDKKDDKKDDI). The span at 458-474 (NSSSSSIGSSNSSNNTP) shows a compositional bias: low complexity. The span at 475–529 (TKDKNKEKEKDKEKEKEKEKKKEKEKLKLEEKKKKKEEKGKSKSKDSKKNKIKGI) shows a compositional bias: basic and acidic residues. Low complexity predominate over residues 574 to 591 (SNSTTTNNSNNNSSSSPN). Over residues 592–603 (ILATSPSNNSLS) the composition is skewed to polar residues. The segment covering 829 to 838 (NQSSSSSSSS) has biased composition (low complexity). Positions 1040–1059 (TTSPTFNSLNNKPSTLQNNH) are enriched in polar residues. Residues 1064–1076 (NGNSSNNNNTDSP) are compositionally biased toward low complexity. A compositionally biased stretch (acidic residues) spans 1234-1244 (NTEDDEQEEEE). Composition is skewed to low complexity over residues 1669 to 1689 (KSIN…LRKS) and 1702 to 1715 (QQQQ…QQQQ). Residues 2037–2048 (SKSSSSKSSSSK) show a composition bias toward low complexity. The stretch at 2321-2354 (TLQINDLGANIISIGNKSTSIKCFLRSIRLSDSR) is one TPR 1 repeat. 7 disordered regions span residues 2456–2489 (KTNN…SIST), 2862–2882 (AVST…NNNG), 3006–3035 (GEQK…SSSS), 3106–3129 (NSSG…SSSN), 3356–3384 (KLPT…KRTT), 3560–3580 (NSLK…HRHN), and 3630–3679 (STNH…SKLK). Low complexity-rich tracts occupy residues 2458–2478 (NNNN…NNNN), 2864–2880 (STSN…SNNN), and 3015–3035 (TSTS…SSSS). Residues 3358-3384 (PTSPQTSSSSSPPPATTTTSTTTKRTT) are compositionally biased toward low complexity. Basic residues predominate over residues 3569–3580 (KSKKQQQQHRHN). Low complexity predominate over residues 3640 to 3679 (SSTFNNSSNDNINNGNSNNNTSNSLSPPSSSSSINLSKLK). A TPR 2 repeat occupies 3789 to 3822 (EVPKPYLGRVDIKDNDTHTSIHFYDQDTEYSPFR). 2 stretches are compositionally biased toward low complexity: residues 3872–3894 (TTTT…NNNN) and 4111–4135 (QQLQ…NPIN). Disordered regions lie at residues 3872–3897 (TTTT…NQYI) and 4105–4135 (KKHK…NPIN).

It is found in the membrane. Its function is as follows. Mediates the transfer of lipids between membranes at organelle contact sites. The protein is Intermembrane lipid transfer protein vps13D (vps13D) of Dictyostelium discoideum (Social amoeba).